Consider the following 358-residue polypeptide: Protein-glutamate methylesterase/protein-glutamine glutaminase 3 (358 aa).

Residues lysine 2–leucine 118 form the Response regulatory domain. Aspartate 52 bears the 4-aspartylphosphate mark. A CheB-type methylesterase domain is found at asparagine 155–lysine 325. Active-site residues include serine 167, histidine 194, and aspartate 291.

The protein belongs to the CheB family. Post-translationally, phosphorylated by CheA. Phosphorylation of the N-terminal regulatory domain activates the methylesterase activity.

It is found in the cytoplasm. It carries out the reaction [protein]-L-glutamate 5-O-methyl ester + H2O = L-glutamyl-[protein] + methanol + H(+). It catalyses the reaction L-glutaminyl-[protein] + H2O = L-glutamyl-[protein] + NH4(+). Involved in chemotaxis. Part of a chemotaxis signal transduction system that modulates chemotaxis in response to various stimuli. Catalyzes the demethylation of specific methylglutamate residues introduced into the chemoreceptors (methyl-accepting chemotaxis proteins or MCP) by CheR. Also mediates the irreversible deamidation of specific glutamine residues to glutamic acid. The protein is Protein-glutamate methylesterase/protein-glutamine glutaminase 3 of Vibrio cholerae serotype O1 (strain ATCC 39315 / El Tor Inaba N16961).